Consider the following 384-residue polypeptide: Tryptophan--tRNA ligase (384 aa).

The short motif at 81–89 (PSGPMHIGH) is the 'HIGH' region element. The 'KMSKS' region motif lies at 252–256 (KMSAS).

It belongs to the class-I aminoacyl-tRNA synthetase family.

The protein localises to the cytoplasm. It catalyses the reaction tRNA(Trp) + L-tryptophan + ATP = L-tryptophyl-tRNA(Trp) + AMP + diphosphate + H(+). The protein is Tryptophan--tRNA ligase of Thermococcus onnurineus (strain NA1).